An 828-amino-acid polypeptide reads, in one-letter code: Glycerol-3-phosphate acyltransferase 1, mitochondrial (828 aa).

At 1 to 87 (MDESALTLGT…FFNPSIPSLG (87 aa)) the chain is on the cytoplasmic side. Positions 80–120 (NPSIPSLGLRNVIYINETHTRHRGWLARRLSYVLFIQERDV) are important for mitochondrial localization. The stretch at 88–118 (LRNVIYINETHTRHRGWLARRLSYVLFIQER) is an intramembrane region. Residues 119–828 (DVHKGMFATN…LEYILSFVVL (710 aa)) lie on the Cytoplasmic side of the membrane. An HXXXXD motif motif is present at residues 230–235 (HRSHID). CoA-binding residues include arginine 278, arginine 279, lysine 288, arginine 293, and arginine 328. At serine 380 the chain carries Phosphoserine. The tract at residues 435–455 (SRPSDAADEGRDTSINESRNA) is disordered. Positions 442–455 (DEGRDTSINESRNA) are enriched in basic and acidic residues. Arginine 462 provides a ligand contact to CoA. Phosphoserine occurs at positions 688 and 695. An N6-acetyllysine mark is found at lysine 780 and lysine 784.

This sequence belongs to the GPAT/DAPAT family.

It is found in the mitochondrion outer membrane. The enzyme catalyses sn-glycerol 3-phosphate + an acyl-CoA = a 1-acyl-sn-glycero-3-phosphate + CoA. The catalysed reaction is (9Z,12Z)-octadecadienoyl-CoA + sn-glycerol 3-phosphate = 1-(9Z,12Z)-octadecadienoyl-sn-glycero-3-phosphate + CoA. It catalyses the reaction sn-glycerol 3-phosphate + (9Z)-octadecenoyl-CoA = 1-(9Z-octadecenoyl)-sn-glycero-3-phosphate + CoA. It carries out the reaction sn-glycerol 3-phosphate + octadecanoyl-CoA = 1-octadecanoyl-sn-glycero-3-phosphate + CoA. The enzyme catalyses sn-glycerol 3-phosphate + hexadecanoyl-CoA = 1-hexadecanoyl-sn-glycero-3-phosphate + CoA. The catalysed reaction is dodecanoyl-CoA + sn-glycerol 3-phosphate = 1-dodecanoyl-sn-glycerol 3-phosphate + CoA. It catalyses the reaction 1-acyl-sn-glycero-3-phospho-(1'-sn-glycerol) + an acyl-CoA = a 1,2-diacyl-sn-glycero-3-phospho-(1'-sn-glycerol) + CoA. The protein operates within phospholipid metabolism; CDP-diacylglycerol biosynthesis; CDP-diacylglycerol from sn-glycerol 3-phosphate: step 1/3. Functionally, mitochondrial membrane protein that catalyzes the essential first step of biosynthesis of glycerolipids such as triglycerides, phosphatidic acids and lysophosphatidic acids. Esterifies acyl-group from acyl-coenzyme A (acyl-CoA) to the sn-1 position of glycerol-3-phosphate, to produce lysophosphatidic acid. Has a narrow hydrophobic binding cleft that selects for a linear acyl chain. Catalytic activity is higher for substrates with a 16-carbon acyl chain. This Homo sapiens (Human) protein is Glycerol-3-phosphate acyltransferase 1, mitochondrial.